The sequence spans 295 residues: Phosphatidylserine decarboxylase proenzyme (295 aa).

Residues aspartate 90 and serine 258 each act as charge relay system; for autoendoproteolytic cleavage activity in the active site. Serine 258 functions as the Schiff-base intermediate with substrate; via pyruvic acid; for decarboxylase activity in the catalytic mechanism. Pyruvic acid (Ser); by autocatalysis is present on serine 258.

Belongs to the phosphatidylserine decarboxylase family. PSD-B subfamily. Prokaryotic type I sub-subfamily. In terms of assembly, heterodimer of a large membrane-associated beta subunit and a small pyruvoyl-containing alpha subunit. Pyruvate is required as a cofactor. Post-translationally, is synthesized initially as an inactive proenzyme. Formation of the active enzyme involves a self-maturation process in which the active site pyruvoyl group is generated from an internal serine residue via an autocatalytic post-translational modification. Two non-identical subunits are generated from the proenzyme in this reaction, and the pyruvate is formed at the N-terminus of the alpha chain, which is derived from the carboxyl end of the proenzyme. The autoendoproteolytic cleavage occurs by a canonical serine protease mechanism, in which the side chain hydroxyl group of the serine supplies its oxygen atom to form the C-terminus of the beta chain, while the remainder of the serine residue undergoes an oxidative deamination to produce ammonia and the pyruvoyl prosthetic group on the alpha chain. During this reaction, the Ser that is part of the protease active site of the proenzyme becomes the pyruvoyl prosthetic group, which constitutes an essential element of the active site of the mature decarboxylase.

Its subcellular location is the cell membrane. It carries out the reaction a 1,2-diacyl-sn-glycero-3-phospho-L-serine + H(+) = a 1,2-diacyl-sn-glycero-3-phosphoethanolamine + CO2. It participates in phospholipid metabolism; phosphatidylethanolamine biosynthesis; phosphatidylethanolamine from CDP-diacylglycerol: step 2/2. In terms of biological role, catalyzes the formation of phosphatidylethanolamine (PtdEtn) from phosphatidylserine (PtdSer). The sequence is that of Phosphatidylserine decarboxylase proenzyme from Blochmanniella pennsylvanica (strain BPEN).